A 260-amino-acid polypeptide reads, in one-letter code: Sphinganine C4-monooxygenase 1 (260 aa).

Transmembrane regions (helical) follow at residues 11–31 (LLGTVAPIVVYWLYSGIYVAL), 55–75 (SVVKGVLVQQVVQAVVAILLF), and 92–112 (FLVLARQFVTAMIVLDTWQYF). In terms of domain architecture, Fatty acid hydroxylase spans 99 to 235 (FVTAMIVLDT…FVMWDRILGT (137 aa)). The Histidine box-1 signature appears at 114 to 118 (HRYMH). Positions 128–132 (HSQHH) match the Histidine box-2 motif. A Histidine box-3 motif is present at residues 207-213 (YHDIHHQ).

The protein belongs to the sterol desaturase family. Fe cation serves as cofactor. Ubiquitous, with higher levels in flowers and roots.

It localises to the endoplasmic reticulum membrane. The catalysed reaction is a dihydroceramide + 2 Fe(II)-[cytochrome b5] + O2 + 2 H(+) = a phytoceramide + 2 Fe(III)-[cytochrome b5] + H2O. It functions in the pathway membrane lipid metabolism; sphingolipid biosynthesis. Its function is as follows. Involved in sphingolipid trihydroxy long-chain base (4-hydroxysphinganine) biosynthesis. Can use C18- and C20-sphinganine as substrates to produce C18- and C20-phytosphinganines (D-ribo-2-amino-1,3,4-trihydroxyoctadecane and -eicosane). The sequence is that of Sphinganine C4-monooxygenase 1 (SBH1) from Arabidopsis thaliana (Mouse-ear cress).